The sequence spans 381 residues: Transaldolase 2 (381 aa).

Lys-141 serves as the catalytic Schiff-base intermediate with substrate.

This sequence belongs to the transaldolase family. Type 2 subfamily.

It is found in the cytoplasm. It carries out the reaction D-sedoheptulose 7-phosphate + D-glyceraldehyde 3-phosphate = D-erythrose 4-phosphate + beta-D-fructose 6-phosphate. The protein operates within carbohydrate degradation; pentose phosphate pathway; D-glyceraldehyde 3-phosphate and beta-D-fructose 6-phosphate from D-ribose 5-phosphate and D-xylulose 5-phosphate (non-oxidative stage): step 2/3. Transaldolase is important for the balance of metabolites in the pentose-phosphate pathway. The polypeptide is Transaldolase 2 (tal2) (Nostoc sp. (strain PCC 7120 / SAG 25.82 / UTEX 2576)).